The sequence spans 239 residues: DNA repair protein RecO (239 aa).

The protein belongs to the RecO family.

In terms of biological role, involved in DNA repair and RecF pathway recombination. The protein is DNA repair protein RecO of Bifidobacterium animalis subsp. lactis (strain AD011).